The primary structure comprises 319 residues: Coproporphyrin III ferrochelatase 2 (319 aa).

Residues tyrosine 13, arginine 30, 46 to 47, serine 54, and tyrosine 125 contribute to the Fe-coproporphyrin III site; that span reads RY. 2 residues coordinate Fe(2+): histidine 181 and glutamate 262.

It belongs to the ferrochelatase family.

It is found in the cytoplasm. It catalyses the reaction Fe-coproporphyrin III + 2 H(+) = coproporphyrin III + Fe(2+). Its pathway is porphyrin-containing compound metabolism; protoheme biosynthesis. In terms of biological role, involved in coproporphyrin-dependent heme b biosynthesis. Catalyzes the insertion of ferrous iron into coproporphyrin III to form Fe-coproporphyrin III. In Bacillus cereus (strain ATCC 14579 / DSM 31 / CCUG 7414 / JCM 2152 / NBRC 15305 / NCIMB 9373 / NCTC 2599 / NRRL B-3711), this protein is Coproporphyrin III ferrochelatase 2.